Reading from the N-terminus, the 606-residue chain is Elongation factor 4 (606 aa).

The 183-residue stretch at 7–189 folds into the tr-type G domain; sequence SRIRNFCIIA…AVVDRVPPPK (183 aa). GTP-binding positions include 19 to 24 and 136 to 139; these read DHGKST and NKID.

This sequence belongs to the TRAFAC class translation factor GTPase superfamily. Classic translation factor GTPase family. LepA subfamily.

It is found in the cell inner membrane. It catalyses the reaction GTP + H2O = GDP + phosphate + H(+). In terms of biological role, required for accurate and efficient protein synthesis under certain stress conditions. May act as a fidelity factor of the translation reaction, by catalyzing a one-codon backward translocation of tRNAs on improperly translocated ribosomes. Back-translocation proceeds from a post-translocation (POST) complex to a pre-translocation (PRE) complex, thus giving elongation factor G a second chance to translocate the tRNAs correctly. Binds to ribosomes in a GTP-dependent manner. This is Elongation factor 4 from Parasynechococcus marenigrum (strain WH8102).